The sequence spans 108 residues: Small proline-rich protein 5 (108 aa).

Residues 1–13 show a composition bias toward low complexity; that stretch reads MSQQKQKQCAPPQ. Disordered stretches follow at residues 1 to 24 and 73 to 108; these read MSQQKQKQCAPPQQCCPPPQQRCP and PPPQQTKQPCQPPPKCQEPCAPKCPPPQQCQTSKQK. 2 stretches are compositionally biased toward pro residues: residues 14–24 and 73–100; these read QCCPPPQQRCP and PPPQQTKQPCQPPPKCQEPCAPKCPPPQ.

Its function is as follows. Positively regulates keratinocyte differentiation by inducing genes associated with epidermal differentiation. In Homo sapiens (Human), this protein is Small proline-rich protein 5.